Reading from the N-terminus, the 329-residue chain is DNA-directed RNA polymerase subunit alpha (329 aa).

The alpha N-terminal domain (alpha-NTD) stretch occupies residues 1–235; the sequence is MQGSVTEFLK…EQLDAFVDLR (235 aa). The tract at residues 249-329 is alpha C-terminal domain (alpha-CTD); the sequence is FDPILLRPVD…NWPPASIAED (81 aa).

The protein belongs to the RNA polymerase alpha chain family. In terms of assembly, homodimer. The RNAP catalytic core consists of 2 alpha, 1 beta, 1 beta' and 1 omega subunit. When a sigma factor is associated with the core the holoenzyme is formed, which can initiate transcription.

It catalyses the reaction RNA(n) + a ribonucleoside 5'-triphosphate = RNA(n+1) + diphosphate. In terms of biological role, DNA-dependent RNA polymerase catalyzes the transcription of DNA into RNA using the four ribonucleoside triphosphates as substrates. This chain is DNA-directed RNA polymerase subunit alpha, found in Actinobacillus succinogenes (strain ATCC 55618 / DSM 22257 / CCUG 43843 / 130Z).